The sequence spans 380 residues: Cytochrome b (380 aa).

4 helical membrane passes run 34-54, 78-99, 114-134, and 179-199; these read FGSL…LLAM, WLIR…YLHI, WNTG…GYVL, and FFAL…IHLT. Heme b contacts are provided by H84 and H98. Residues H183 and H197 each coordinate heme b. A ubiquinone is bound at residue H202. Transmembrane regions (helical) follow at residues 227–247, 289–309, 321–341, and 348–368; these read LKDI…ALFS, LGGV…PFLH, ISQL…WVGS, and FIII…ILFP.

This sequence belongs to the cytochrome b family. In terms of assembly, the cytochrome bc1 complex contains 11 subunits: 3 respiratory subunits (MT-CYB, CYC1 and UQCRFS1), 2 core proteins (UQCRC1 and UQCRC2) and 6 low-molecular weight proteins (UQCRH/QCR6, UQCRB/QCR7, UQCRQ/QCR8, UQCR10/QCR9, UQCR11/QCR10 and a cleavage product of UQCRFS1). This cytochrome bc1 complex then forms a dimer. It depends on heme b as a cofactor.

The protein localises to the mitochondrion inner membrane. Functionally, component of the ubiquinol-cytochrome c reductase complex (complex III or cytochrome b-c1 complex) that is part of the mitochondrial respiratory chain. The b-c1 complex mediates electron transfer from ubiquinol to cytochrome c. Contributes to the generation of a proton gradient across the mitochondrial membrane that is then used for ATP synthesis. In Pelecanoides garnotii (Peruvian diving petrel), this protein is Cytochrome b (MT-CYB).